Here is a 234-residue protein sequence, read N- to C-terminus: Riboflavin kinase (234 aa).

The tract at residues 1-98 (MAESTTAVGH…QEIFGDNSSV (98 aa)) is H-T-H motif-like. The segment at 99 to 234 (VELTGTVTSG…RITVQLKPKE (136 aa)) is riboflavin kinase. 108–113 (GMGEGR) lines the CDP pocket. The Mg(2+) site is built by T137 and N139. 2 residues coordinate FMN: T199 and E207. Residue 212–215 (ERLR) participates in CDP binding.

It belongs to the archaeal riboflavin kinase family. Mg(2+) is required as a cofactor.

The catalysed reaction is riboflavin + CTP = CDP + FMN + H(+). Its pathway is cofactor biosynthesis; FMN biosynthesis; FMN from riboflavin (CTP route): step 1/1. Functionally, catalyzes the CTP-dependent phosphorylation of riboflavin (vitamin B2) to form flavin mononucleotide (FMN). In Haloquadratum walsbyi (strain DSM 16790 / HBSQ001), this protein is Riboflavin kinase (ribK).